The following is a 227-amino-acid chain: Phosphoribosylformylglycinamidine synthase subunit PurQ (227 aa).

The region spanning 2-226 (KFAVIQFPGS…VKAWKEEQVN (225 aa)) is the Glutamine amidotransferase type-1 domain. The active-site Nucleophile is the cysteine 86. Residues histidine 195 and glutamate 197 contribute to the active site.

Part of the FGAM synthase complex composed of 1 PurL, 1 PurQ and 2 PurS subunits.

The protein localises to the cytoplasm. The catalysed reaction is N(2)-formyl-N(1)-(5-phospho-beta-D-ribosyl)glycinamide + L-glutamine + ATP + H2O = 2-formamido-N(1)-(5-O-phospho-beta-D-ribosyl)acetamidine + L-glutamate + ADP + phosphate + H(+). It carries out the reaction L-glutamine + H2O = L-glutamate + NH4(+). The protein operates within purine metabolism; IMP biosynthesis via de novo pathway; 5-amino-1-(5-phospho-D-ribosyl)imidazole from N(2)-formyl-N(1)-(5-phospho-D-ribosyl)glycinamide: step 1/2. Its function is as follows. Part of the phosphoribosylformylglycinamidine synthase complex involved in the purines biosynthetic pathway. Catalyzes the ATP-dependent conversion of formylglycinamide ribonucleotide (FGAR) and glutamine to yield formylglycinamidine ribonucleotide (FGAM) and glutamate. The FGAM synthase complex is composed of three subunits. PurQ produces an ammonia molecule by converting glutamine to glutamate. PurL transfers the ammonia molecule to FGAR to form FGAM in an ATP-dependent manner. PurS interacts with PurQ and PurL and is thought to assist in the transfer of the ammonia molecule from PurQ to PurL. The polypeptide is Phosphoribosylformylglycinamidine synthase subunit PurQ (Listeria monocytogenes serotype 4a (strain HCC23)).